We begin with the raw amino-acid sequence, 193 residues long: MSTMLIAVILLTLLALFFGVLLGFAALKFKVEGNPIVDELEAILPQTQCGQCGYPGCRPYAEAIANGDKVNKCPPGGTATMEKLASLMGVEPEPLNAEAQSQVKKVAYIREDECIGCTKCIQACPVDAIIGAGKLMHTVLTADCTGCDLCVEPCPVDCIDMLPVGQNLKNWNWRLNAIPVTLIQETPHEEKRG.

Residues M1 to A26 are hydrophobic. The region spanning E32 to V90 is the 4Fe-4S domain. Positions 49, 52, 57, 73, 114, 117, 120, 124, 144, 147, 150, and 154 each coordinate [4Fe-4S] cluster. 4Fe-4S ferredoxin-type domains are found at residues K105–K134 and M136–V164.

Belongs to the 4Fe4S bacterial-type ferredoxin family. RnfB subfamily. The complex is composed of six subunits: RnfA, RnfB, RnfC, RnfD, RnfE and RnfG. The cofactor is [4Fe-4S] cluster.

It localises to the cell inner membrane. Its function is as follows. Part of a membrane-bound complex that couples electron transfer with translocation of ions across the membrane. The protein is Ion-translocating oxidoreductase complex subunit B of Shewanella sp. (strain MR-4).